A 135-amino-acid polypeptide reads, in one-letter code: Large ribosomal subunit protein mL41 (135 aa).

Residues 1 to 13 (MGVLSALARGFVR) constitute a mitochondrion transit peptide.

Belongs to the mitochondrion-specific ribosomal protein mL41 family. Component of the mitochondrial ribosome large subunit (39S) which comprises a 16S rRNA and about 50 distinct proteins.

The protein resides in the mitochondrion. Functionally, component of the mitochondrial ribosome large subunit. Also involved in apoptosis and cell cycle. The protein is Large ribosomal subunit protein mL41 (mrpl41) of Danio rerio (Zebrafish).